Here is a 967-residue protein sequence, read N- to C-terminus: Serine/threonine-protein kinase/endoribonuclease ire-1 (967 aa).

The first 21 residues, 1 to 21 (MRATFHLFTFIFLLLFSSVIC), serve as a signal peptide directing secretion. Residues 22–438 (ISTPGFRNDH…LLLLNNHPIP (417 aa)) are Lumenal-facing. Asparagine 100 and asparagine 188 each carry an N-linked (GlcNAc...) asparagine glycan. The chain crosses the membrane as a helical span at residues 439-455 (FYATLVTMFALLLTVIW). Topologically, residues 456 to 967 (QCGRQWDQQK…IKKKSNPNTD (512 aa)) are cytoplasmic. Residues 474 to 494 (EIVNNPGESRSAQTSKQSNRG) form a disordered region. Over residues 479–494 (PGESRSAQTSKQSNRG) the composition is skewed to polar residues. The Protein kinase domain occupies 518–778 (YSPSDILGTG…ADAVLNHPFF (261 aa)). Residues 524–532 (LGTGCEGTV) and lysine 546 contribute to the ATP site. The Proton acceptor role is filled by aspartate 636. Residue serine 672 is modified to Phosphoserine; by autocatalysis. A KEN domain is found at 781–909 (SEKRLAYFSD…EAVFKRYYSD (129 aa)). Residues 948-967 (RTPLKLDKRNIKKKSNPNTD) form a disordered region. Residues 957-967 (NIKKKSNPNTD) show a composition bias toward basic residues.

It belongs to the protein kinase superfamily. Ser/Thr protein kinase family. Mg(2+) is required as a cofactor. Autophosphorylated mainly on serine residues.

Its subcellular location is the endoplasmic reticulum membrane. It catalyses the reaction L-seryl-[protein] + ATP = O-phospho-L-seryl-[protein] + ADP + H(+). The enzyme catalyses L-threonyl-[protein] + ATP = O-phospho-L-threonyl-[protein] + ADP + H(+). Its activity is regulated as follows. The kinase domain is activated by trans-autophosphorylation. Kinase activity is required for activation of the endoribonuclease domain. Functionally, senses unfolded proteins in the lumen of the endoplasmic reticulum via its N-terminal domain which leads to enzyme auto-activation. The active endoribonuclease domain splices xbp-1 precursor mRNA to produce the mature form which then induces transcription of UPR target genes. Unfolded protein response (UPR) transcriptional activation by ire-1, as well as translational attenuation by pek-1 in a complementary pathway, maintains ER homeostasis. Regulates the transcriptional up-regulation of nucleoside-diphosphatase apy-1 and many other genes, upon ER stress. By activating the UPR pathway during non-lethal hypoxia pre-conditioning, confers adaptive protection to subsequent exposure to hypoxia. ire-1 and pek-1 are redundant genes that control a pathway essential for larval development and survival. Plays a role in the nuclear retention of unspliced mRNAs. This chain is Serine/threonine-protein kinase/endoribonuclease ire-1, found in Caenorhabditis elegans.